A 216-amino-acid chain; its full sequence is Noggin-1 (216 aa).

Positions 1 to 18 are cleaved as a signal peptide; that stretch reads MDFPRFLLSAYLLLLSFA. A glycan (N-linked (GlcNAc...) asparagine) is linked at Asn55.

Belongs to the noggin family. Homodimer; disulfide-linked.

Its subcellular location is the secreted. In terms of biological role, inhibitor of bone morphogenetic proteins (BMP) signaling. May play an important role in the dorsoventral patterning of the embryo. In Danio rerio (Zebrafish), this protein is Noggin-1 (nog1).